Consider the following 777-residue polypeptide: Protein translocase subunit SecA (777 aa).

Residues Gln-94, 112-116, and Asp-501 contribute to the ATP site; that span reads GEGKT.

It belongs to the SecA family. In terms of assembly, monomer and homodimer. Part of the essential Sec protein translocation apparatus which comprises SecA, SecYEG and auxiliary proteins SecDF. Other proteins may also be involved.

The protein localises to the cell membrane. The protein resides in the cytoplasm. The catalysed reaction is ATP + H2O + cellular proteinSide 1 = ADP + phosphate + cellular proteinSide 2.. Its function is as follows. Part of the Sec protein translocase complex. Interacts with the SecYEG preprotein conducting channel. Has a central role in coupling the hydrolysis of ATP to the transfer of proteins into and across the cell membrane, serving as an ATP-driven molecular motor driving the stepwise translocation of polypeptide chains across the membrane. The protein is Protein translocase subunit SecA of Mycobacterium avium (strain 104).